We begin with the raw amino-acid sequence, 193 residues long: Imidazoleglycerol-phosphate dehydratase (193 aa).

It belongs to the imidazoleglycerol-phosphate dehydratase family.

The protein resides in the cytoplasm. The catalysed reaction is D-erythro-1-(imidazol-4-yl)glycerol 3-phosphate = 3-(imidazol-4-yl)-2-oxopropyl phosphate + H2O. It functions in the pathway amino-acid biosynthesis; L-histidine biosynthesis; L-histidine from 5-phospho-alpha-D-ribose 1-diphosphate: step 6/9. In Staphylococcus carnosus (strain TM300), this protein is Imidazoleglycerol-phosphate dehydratase.